The primary structure comprises 308 residues: MKHYEVEILDAKTREKLCFLDKVEPHATIAEIKNLFTKTHPQWYPARQSLRLDPKGKSLKDEDVLQKLPVGTTATLYFRDLGAQISWVTVFLTEYAGPLFIYLLFYFRVPFIYGHKYDFTSSRHTVVHLACICHSFHYIKRLLETLFVHRFSHGTMPLRNIFKNCTYYWGFAAWMAYYINHPLYTPPTYGAQQVKLALAIFVICQLGNFSIHMALRDLRPAGSKTRKIPYPTKNPFTWLFLLVSCPNYTYEVGSWIGFAIMTQCLPVALFSLVGFTQMTIWAKGKHRSYLKEFRDYPPLRMPIIPFLL.

At 1-86 (MKHYEVEILD…YFRDLGAQIS (86 aa)) the chain is on the cytoplasmic side. Lysine 22 is modified (N6-acetyllysine). A Phosphoserine modification is found at serine 58. Lysine 60 carries the N6-acetyllysine modification. The helical transmembrane segment at 87-106 (WVTVFLTEYAGPLFIYLLFY) threads the bilayer. The Lumenal segment spans residues 107-124 (FRVPFIYGHKYDFTSSRH). Residues 125–147 (TVVHLACICHSFHYIKRLLETLF) form a helical membrane-spanning segment. Over 148–158 (VHRFSHGTMPL) the chain is Cytoplasmic. A helical transmembrane segment spans residues 159–180 (RNIFKNCTYYWGFAAWMAYYIN). Over 181–189 (HPLYTPPTY) the chain is Lumenal. Residues 190–216 (GAQQVKLALAIFVICQLGNFSIHMALR) form a helical membrane-spanning segment. Over 217–245 (DLRPAGSKTRKIPYPTKNPFTWLFLLVSC) the chain is Cytoplasmic. A helical membrane pass occupies residues 246 to 262 (PNYTYEVGSWIGFAIMT). The Lumenal segment spans residues 263–264 (QC). Residues 265–292 (LPVALFSLVGFTQMTIWAKGKHRSYLKE) form a helical membrane-spanning segment. Residues 293–308 (FRDYPPLRMPIIPFLL) lie on the Cytoplasmic side of the membrane.

It belongs to the steroid 5-alpha reductase family. As to quaternary structure, interacts with ELOVL1 and LASS2. Interacts with HACD1 and HACD2 (via the third lumenal loop), but not with HACD3 and HACD4. Interacts with ELOVL1, ELOVL2, ELOVL3, ELOVL5 and ELOVL7 in the presence of acyl-CoA; interaction with HACD1/2 and that with ELOVLs are mutually exclusive. Post-translationally, glycosylated. In terms of tissue distribution, expressed in most tissues tested. Highly expressed in skeletal muscle.

It localises to the endoplasmic reticulum membrane. The catalysed reaction is a very-long-chain 2,3-saturated fatty acyl-CoA + NADP(+) = a very-long-chain (2E)-enoyl-CoA + NADPH + H(+). It catalyses the reaction octadecanoyl-CoA + NADP(+) = (2E)-octadecenoyl-CoA + NADPH + H(+). It carries out the reaction (2E,7Z,10Z,13Z,16Z)-docosapentaenoyl-CoA + NADPH + H(+) = (7Z,10Z,13Z,16Z)-docosatetraenoyl-CoA + NADP(+). The enzyme catalyses (2E,7Z,10Z,13Z,16Z,19Z)-docosahexaenoyl-CoA + NADPH + H(+) = (7Z,10Z,13Z,16Z,19Z)-docosapentaenoyl-CoA + NADP(+). The catalysed reaction is (2E,8Z,11Z,14Z)-eicosatetraenoyl-CoA + NADPH + H(+) = (8Z,11Z,14Z)-eicosatrienoyl-CoA + NADP(+). It catalyses the reaction (2E)-hexadecenoyl-CoA + NADPH + H(+) = hexadecanoyl-CoA + NADP(+). The protein operates within lipid metabolism; fatty acid biosynthesis. It functions in the pathway lipid metabolism; sphingolipid metabolism. Its function is as follows. Involved in both the production of very long-chain fatty acids for sphingolipid synthesis and the degradation of the sphingosine moiety in sphingolipids through the sphingosine 1-phosphate metabolic pathway. Catalyzes the last of the four reactions of the long-chain fatty acids elongation cycle. This endoplasmic reticulum-bound enzymatic process, allows the addition of 2 carbons to the chain of long- and very long-chain fatty acids/VLCFAs per cycle. This enzyme reduces the trans-2,3-enoyl-CoA fatty acid intermediate to an acyl-CoA that can be further elongated by entering a new cycle of elongation. Thereby, it participates in the production of VLCFAs of different chain lengths that are involved in multiple biological processes as precursors of membrane lipids and lipid mediators. Catalyzes the saturation step of the sphingosine 1-phosphate metabolic pathway, the conversion of trans-2-hexadecenoyl-CoA to palmitoyl-CoA. This chain is Very-long-chain enoyl-CoA reductase (TECR), found in Homo sapiens (Human).